Consider the following 214-residue polypeptide: Guanylate kinase (214 aa).

The region spanning 6-192 is the Guanylate kinase-like domain; sequence GTLYIISAPS…ALEDLKAIFR (187 aa). 13–20 serves as a coordination point for ATP; that stretch reads APSGAGKT.

It belongs to the guanylate kinase family.

The protein localises to the cytoplasm. The catalysed reaction is GMP + ATP = GDP + ADP. Essential for recycling GMP and indirectly, cGMP. This is Guanylate kinase from Pseudomonas savastanoi pv. phaseolicola (strain 1448A / Race 6) (Pseudomonas syringae pv. phaseolicola (strain 1448A / Race 6)).